A 332-amino-acid polypeptide reads, in one-letter code: 2,3-diketo-L-gulonate reductase (332 aa).

Histidine 44 functions as the Proton donor in the catalytic mechanism. NAD(+) is bound by residues 168–174 (ITMVDMS), 224–225 (WK), and 304–306 (GHE).

It belongs to the LDH2/MDH2 oxidoreductase family. DlgD subfamily. In terms of assembly, homodimer.

Its subcellular location is the cytoplasm. The enzyme catalyses 3-dehydro-L-gulonate + NAD(+) = 2,3-dioxo-L-gulonate + NADH + H(+). It catalyses the reaction 3-dehydro-L-gulonate + NADP(+) = 2,3-dioxo-L-gulonate + NADPH + H(+). Functionally, catalyzes the reduction of 2,3-diketo-L-gulonate in the presence of NADH, to form 3-keto-L-gulonate. The protein is 2,3-diketo-L-gulonate reductase of Escherichia coli O139:H28 (strain E24377A / ETEC).